A 174-amino-acid polypeptide reads, in one-letter code: RNA pyrophosphohydrolase (174 aa).

Positions 6-149 (GYRPNVGIIL…KRDVYERALS (144 aa)) constitute a Nudix hydrolase domain. A Nudix box motif is present at residues 38 to 59 (GGIKPGESPEAAMYRELLEEVG).

It belongs to the Nudix hydrolase family. RppH subfamily. A divalent metal cation is required as a cofactor.

Its function is as follows. Accelerates the degradation of transcripts by removing pyrophosphate from the 5'-end of triphosphorylated RNA, leading to a more labile monophosphorylated state that can stimulate subsequent ribonuclease cleavage. In Chromobacterium violaceum (strain ATCC 12472 / DSM 30191 / JCM 1249 / CCUG 213 / NBRC 12614 / NCIMB 9131 / NCTC 9757 / MK), this protein is RNA pyrophosphohydrolase.